A 372-amino-acid chain; its full sequence is Glutamate 5-kinase (372 aa).

An ATP-binding site is contributed by lysine 14. The substrate site is built by serine 54, aspartate 141, and asparagine 153. Position 173-174 (173-174 (TD)) interacts with ATP. Residues 280 to 358 (RGHVVIDDGA…GEIESVLGYM (79 aa)) enclose the PUA domain.

The protein belongs to the glutamate 5-kinase family.

The protein resides in the cytoplasm. The catalysed reaction is L-glutamate + ATP = L-glutamyl 5-phosphate + ADP. It participates in amino-acid biosynthesis; L-proline biosynthesis; L-glutamate 5-semialdehyde from L-glutamate: step 1/2. Functionally, catalyzes the transfer of a phosphate group to glutamate to form L-glutamate 5-phosphate. In Paraburkholderia phytofirmans (strain DSM 17436 / LMG 22146 / PsJN) (Burkholderia phytofirmans), this protein is Glutamate 5-kinase.